The sequence spans 139 residues: Protein archease (139 aa).

Ca(2+) is bound by residues Asp-12, Asp-138, and Ile-139.

This sequence belongs to the archease family.

Activates the tRNA-splicing ligase complex by facilitating the enzymatic turnover of catalytic subunit RtcB. Acts by promoting the guanylylation of RtcB, a key intermediate step in tRNA ligation. Can also alter the NTP specificity of RtcB such that ATP, dGTP or ITP is used efficiently. This is Protein archease from Saccharolobus islandicus (strain Y.G.57.14 / Yellowstone #1) (Sulfolobus islandicus).